Reading from the N-terminus, the 383-residue chain is Succinyl-diaminopimelate desuccinylase (383 aa).

Histidine 79 serves as a coordination point for Zn(2+). The active site involves aspartate 81. Aspartate 110 contacts Zn(2+). Glutamate 141 (proton acceptor) is an active-site residue. Positions 142, 170, and 355 each coordinate Zn(2+).

Belongs to the peptidase M20A family. DapE subfamily. Homodimer. It depends on Zn(2+) as a cofactor. Co(2+) is required as a cofactor.

The enzyme catalyses N-succinyl-(2S,6S)-2,6-diaminopimelate + H2O = (2S,6S)-2,6-diaminopimelate + succinate. It participates in amino-acid biosynthesis; L-lysine biosynthesis via DAP pathway; LL-2,6-diaminopimelate from (S)-tetrahydrodipicolinate (succinylase route): step 3/3. In terms of biological role, catalyzes the hydrolysis of N-succinyl-L,L-diaminopimelic acid (SDAP), forming succinate and LL-2,6-diaminopimelate (DAP), an intermediate involved in the bacterial biosynthesis of lysine and meso-diaminopimelic acid, an essential component of bacterial cell walls. This Helicobacter pylori (strain Shi470) protein is Succinyl-diaminopimelate desuccinylase.